We begin with the raw amino-acid sequence, 122 residues long: Small ribosomal subunit protein bS16 (122 aa).

Residues 81-122 (GLMKRDAKNNPKKGEPGEKAKERAKERAEKAAAGSTEDAAAE) form a disordered region. The segment covering 83–110 (MKRDAKNNPKKGEPGEKAKERAKERAEK) has biased composition (basic and acidic residues). Over residues 111–122 (AAAGSTEDAAAE) the composition is skewed to low complexity.

This sequence belongs to the bacterial ribosomal protein bS16 family.

The chain is Small ribosomal subunit protein bS16 from Xanthobacter autotrophicus (strain ATCC BAA-1158 / Py2).